A 509-amino-acid polypeptide reads, in one-letter code: Dol-P-Glc:Glc(2)Man(9)GlcNAc(2)-PP-Dol alpha-1,2-glucosyltransferase (509 aa).

The Cytoplasmic segment spans residues 1-4; the sequence is MGKL. Residues 5–25 traverse the membrane as a helical segment; it reads AVAAITSLWVIPMSIIVNHIV. Residues 26 to 57 are Lumenal-facing; it reads PEPYMDEIFHVPQAQQYCNGNFRSWDPMITTP. Residues 58 to 78 traverse the membrane as a helical segment; the sequence is PGLYYLSLAHVASLFPGMLLM. The Cytoplasmic portion of the chain corresponds to 79 to 99; that stretch reads ENTSQSFSEACSTSVLRSTNA. The helical transmembrane segment at 100–120 threads the bilayer; the sequence is VSAVLCGVLVYEIIRFLGPNL. Residues 121 to 124 are Lumenal-facing; that stretch reads SDRK. Residues 125–145 form a helical membrane-spanning segment; that stretch reads ATFMALVMSLYPLHWFFTFLY. Over 146-170 the chain is Cytoplasmic; it reads YTDVASLTAVLAMYLTCLKRRYVLS. The helical transmembrane segment at 171–191 threads the bilayer; that stretch reads ALFGTLAVFIRQTNVVWMLFV. Topologically, residues 192–285 are lumenal; that stretch reads ACSGILDFTL…KWRILIKFSP (94 aa). A disordered region spans residues 210-254; sequence QEVNQELHQSSNKKGATLRSNLRKRKSDISSDTSDPFNHGQTVPS. 2 stretches are compositionally biased toward polar residues: residues 215 to 229 and 239 to 254; these read ELHQSSNKKGATLRS and SSDTSDPFNHGQTVPS. The chain crosses the membrane as a helical span at residues 286–306; that stretch reads FIFVVVAFGIFILWNGGIVLG. At 307 to 311 the chain is on the cytoplasmic side; the sequence is AKEAH. Residues 312 to 332 form a helical membrane-spanning segment; the sequence is VVSLHFAQIMYFSLVSALFTA. At 333 to 355 the chain is on the lumenal side; it reads PLHFSVNQLRHQFHQLHRNWSLS. Asparagine 351 is a glycosylation site (N-linked (GlcNAc...) asparagine). The chain crosses the membrane as a helical span at residues 356-376; the sequence is LILTLVALVAGFVSVHFFSLA. Residues 377 to 400 are Cytoplasmic-facing; it reads HPYLLADNRHYPFYLWRKIINAHW. The helical transmembrane segment at 401-421 threads the bilayer; that stretch reads LMKYILVPVYVYSWFSILTLL. The Lumenal portion of the chain corresponds to 422-428; it reads AKTRRQT. The helical transmembrane segment at 429–449 threads the bilayer; the sequence is WILVYFLATCGVLVPTPLIEF. Over 450 to 472 the chain is Cytoplasmic; that stretch reads RYYTIPFYLFMLHSCVRSSSFAT. The chain crosses the membrane as a helical span at residues 473–493; the sequence is WLLIGTIFVSINVFTMAMFLF. Over 494-509 the chain is Lumenal; the sequence is RPFKWSHEDGVQRFIW.

This sequence belongs to the ALG10 glucosyltransferase family.

It localises to the endoplasmic reticulum membrane. The enzyme catalyses an alpha-D-Glc-(1-&gt;3)-alpha-D-Glc-(1-&gt;3)-alpha-D-Man-(1-&gt;2)-alpha-D-Man-(1-&gt;2)-alpha-D-Man-(1-&gt;3)-[alpha-D-Man-(1-&gt;2)-alpha-D-Man-(1-&gt;3)-[alpha-D-Man-(1-&gt;2)-alpha-D-Man-(1-&gt;6)]-alpha-D-Man-(1-&gt;6)]-beta-D-Man-(1-&gt;4)-beta-D-GlcNAc-(1-&gt;4)-alpha-D-GlcNAc-diphospho-di-trans,poly-cis-dolichol + a di-trans,poly-cis-dolichyl beta-D-glucosyl phosphate = a alpha-D-Glc-(1-&gt;2)-alpha-D-Glc-(1-&gt;3)-alpha-D-Glc-(1-&gt;3)-alpha-D-Man-(1-&gt;2)-alpha-D-Man-(1-&gt;2)-alpha-D-Man-(1-&gt;3)-[alpha-D-Man-(1-&gt;2)-alpha-D-Man-(1-&gt;3)-[alpha-D-Man-(1-&gt;2)-alpha-D-Man-(1-&gt;6)]-alpha-D-Man-(1-&gt;6)]-beta-D-Man-(1-&gt;4)-beta-D-GlcNAc-(1-&gt;4)-alpha-D-GlcNAc-diphospho-di-trans,poly-cis-dolichol + a di-trans,poly-cis-dolichyl phosphate + H(+). Its pathway is protein modification; protein glycosylation. In terms of biological role, dol-P-Glc:Glc(2)Man(9)GlcNAc(2)-PP-Dol alpha-1,2-glucosyltransferase that operates in the biosynthetic pathway of dolichol-linked oligosaccharides, the glycan precursors employed in protein asparagine (N)-glycosylation. The assembly of dolichol-linked oligosaccharides begins on the cytosolic side of the endoplasmic reticulum membrane and finishes in its lumen. The sequential addition of sugars to dolichol pyrophosphate produces dolichol-linked oligosaccharides containing fourteen sugars, including two GlcNAcs, nine mannoses and three glucoses. Once assembled, the oligosaccharide is transferred from the lipid to nascent proteins by oligosaccharyltransferases. In the lumen of the endoplasmic reticulum, adds the third and last glucose residue from dolichyl phosphate glucose (Dol-P-Glc) onto the lipid-linked oligosaccharide intermediate Glc(2)Man(9)GlcNAc(2)-PP-Dol to produce Glc(3)Man(9)GlcNAc(2)-PP-Dol. The chain is Dol-P-Glc:Glc(2)Man(9)GlcNAc(2)-PP-Dol alpha-1,2-glucosyltransferase from Arabidopsis thaliana (Mouse-ear cress).